The sequence spans 631 residues: Probable potassium transport system protein Kup (631 aa).

12 consecutive transmembrane segments (helical) span residues 17–37 (IGLLIAAVGVVYGDIGTSPLY), 56–76 (ILGVLSLIFWSLIWVVSFKYM), 109–129 (MMMVVFGLFGAALFYGDSMIT), 147–167 (GLDHWIVPMALIVLVGLFLIQ), 174–194 (IGVLFGPVMVTWFLVLGALGV), 215–235 (FFIIHPGIGVAILGAVVLALT), 256–276 (WFILVLPALLLNYFGQGALVL), 288–308 (LLAPGWALLPLIGLSTMATII), 346–366 (IYIGAVNWALMAGVILLVIGF), 378–398 (VAVTGTMLCTTILVSTVMLML), 403–423 (PLLAVPLLICLLLVDGLFFAA), and 428–448 (IFQGGAFPVLAGAVLFILMTT).

It belongs to the HAK/KUP transporter (TC 2.A.72) family.

The protein localises to the cell inner membrane. It catalyses the reaction K(+)(in) + H(+)(in) = K(+)(out) + H(+)(out). In terms of biological role, transport of potassium into the cell. Likely operates as a K(+):H(+) symporter. In Pseudomonas savastanoi pv. phaseolicola (strain 1448A / Race 6) (Pseudomonas syringae pv. phaseolicola (strain 1448A / Race 6)), this protein is Probable potassium transport system protein Kup.